Consider the following 724-residue polypeptide: MALISNLKDEYDHPTKTDPDTNPKIVADIISSKEPPQPSQDVAEERSRTDWDLKEMHEFLEGDEAKSEEILRLYQSIERDPILQTRPEQFDYTKNEERESVALRINQMSKYLETEPYEKFRRRLQLMTVNDPSLGIRMLVNIGLFLNCIRGNGTQKQYDFWAKTKEAGKVKQLLRLFRYDELGHGFNVAGCEIFATFDEKTDQFIIDTPHIGATKWWIGGAAHSATHTVCYARLIVKDIDYGVKTFVVPLRDSTHNLLPGVAIGDIGPKLGRQGVDNGWIQFTEVRIPRFFMLQRWCKVDRQGNVTLPPLEQLSYISLLEGRVGMATDSYRIGARYTTIALRYAVARRQFSKGDGQPETKLIDYTLHQRRLLPYLALTYLAALGTDKLERQHDQLLKNLDKALATNNKLLLKNTIQSTKSMFVDSGSLKSTLTWLASDLINEARQSCGGHGYSAYNGFGKTYGDWAVQCTWEGDNNVLGMSAGKTIIKTVQQVLNGKQLKDSTLEFLNDAPALSSAKKAVIRIKSHVDDTDRVLKAIAGLISKYAKDLIPVSYQSWDSIGPQRVVLSKFRCHYYLLETFNERLNDRIKAKSPARPHLENIIKLYYVTNVLGPFIDEFLRFGVISPSVAKYITTEYPQKLCAAIRPYVIGLTDSFQQPDNFINSLIGRYDGNVYTNYLTNVTNVNDPTNYKAPYSEALEAMLNRASLEERERFEKSKAVAAKLSQ.

A disordered region spans residues 1 to 23 (MALISNLKDEYDHPTKTDPDTNP). Positions 7-21 (LKDEYDHPTKTDPDT) are enriched in basic and acidic residues.

Belongs to the acyl-CoA oxidase family. It depends on FAD as a cofactor.

Its subcellular location is the peroxisome. It catalyses the reaction a 2,3-saturated acyl-CoA + O2 = a (2E)-enoyl-CoA + H2O2. It functions in the pathway lipid metabolism; peroxisomal fatty acid beta-oxidation. The polypeptide is Acyl-coenzyme A oxidase 2 (POX2) (Candida maltosa (Yeast)).